The following is a 74-amino-acid chain: Conotoxin Cal27 (74 aa).

An N-terminal signal peptide occupies residues 1–19 (MSGTGVLLLTLLLLVAMAA).

May contain 4 disulfide bonds. As to expression, expressed by the venom duct.

It localises to the secreted. Probable neurotoxin. The chain is Conotoxin Cal27 from Californiconus californicus (California cone).